The primary structure comprises 288 residues: Aquaporin PIP2-4 (288 aa).

Residues 1-24 (MAKDIEASGPEAGEFSAKDYTDPP) form a disordered region. The next 2 helical transmembrane spans lie at 42–62 (AVIAEFIATLLFLYITVATVI) and 79–99 (CGGVGILGIAWAFGGMIFILV). The short motif at 111 to 113 (NPA) is the NPA 1 element. Transmembrane regions (helical) follow at residues 130 to 150 (LLYIIAQCLGAICGVGLVKGF), 172 to 192 (GTGLAAEIIGTFVLVYTVFSA), and 206 to 226 (VLAPLPIGFAVFMVHLATIPI). Positions 232–234 (NPA) match the NPA 2 motif. Residues 254–274 (IFWVGPLIGAAIAAAYHQYVL) form a helical membrane-spanning segment.

It belongs to the MIP/aquaporin (TC 1.A.8) family. PIP (TC 1.A.8.11) subfamily. Homomers. May interact with PIP1-2 to form heteromers. In terms of tissue distribution, expressed in the root growing zone at 5-6 mm from the root tip.

The protein localises to the cell membrane. Functionally, water channel required to facilitate the transport of water across cell membrane. Active as homomers. Increased activity when heteromerization with PIP1-2. This Zea mays (Maize) protein is Aquaporin PIP2-4 (PIP2-4).